The chain runs to 1357 residues: MAYSYTEKKRIRKDFSKLPDVMDVPYLLAIQLDSYREFLQAGATKDQFRDVGLHAAFKSVFPIISYSGNAALEYVGYRLGEPAFDVKECVLRGVTYAVPLRVKVRLIIFDKESSNKAIKDIKEQEVYMGEIPLMTENGTFVINGTERVIVSQLHRSPGVFFDHDRGKTHSSGKLLYSARIIPYRGSWLDFEFDPKDCVFVRIDRRRKLPASVLLRALGYTTEQVLDAFYTTNVFHVRGENLNLELVPQRLRGEIAVLDILDDKGKVIVEQGRRITARHINQLEKAGIKELEVPLDYVLGRTTAKVIVHPATGEIIAECNTELNTEILGKIAKAQVVRIETLYTNDIDCGPFVSDTLKIDSTSNQLEALVEIYRMMRPGEPPTKDAAETLFNNLFFSPERYDLSAVGRMKFNRRIGRTEIEGSGVLCKEDIVAVLKTLVDIRNGKGIVDDIDHLGNRRVRCVGEMAENQFRVGLVRVERAVKERLSMAESEGLMPQDLINAKPVAAAVKEFFGSSQLSQFMDQNNPLSEITCKRRVSALGPGGLTRERAGFEVRDVHPTHYGRVCPIETPEGPNIGLINSLAAYARTNQYGFLESPYRVVKEGLVTDEIVFLSAIEEADHVIAQASAAMNDKQELIDELVAVRHLNEFTVKAPADVTLMDVSPKQVVSVAASLIPFLEHDDANRALMGSNMQRQAVPTLRADKPLVGTGMERNVARDSGVCVVARRGGVIDSVDASRIVVRVADDEVETGEAGVDIYNLTKYTRSNQNTCINQRPLVSKGDRVQRSDIMADGPSTDMGELALGQNMRIAFMAWNGFNFEDSICLSERVVQEDRFTTIHIQELTCVARDTKLGPEEITADIPNVGEAALNKLDEAGIVYVGAEVGAGDILVGKVTPKGETQLTPEEKLLRAIFGEKASDVKDTSLRVPTGTKGTVIDVQVFTRDGVERDARALSIEKSQLDEIRKDLNEEFRIVEGATFERLRSALVGRVAEGGAGLKKGQEITNEVLDGLEHGQWFKLRMAEDALNEQLEKAQAYIVDRRRLLDDKFEDKKRKLQQGDDLAPGVLKIVKVYLAIRRRIQPGDKMAGRHGNKGVVSVIMPVEDMPHDANGTPVDIVLNPLGVPSRMNVGQILETHLGLAAKGLGEKINRMLEEQRKVIELRKFLNEIYNEIGGRQEALEDLTDNEILDLAKNLRNGVPMATPVFDGAKESEIKAMLKLADMPESGQMQLFDGRTGNKFERPVTVGYMYMLKLNHLVDDKMHARSTGSYSLVTQQPLGGKAQFGGQRFGEMEVWALEAYGAAYTLQEMLTVKSDDVNGRTKMYKNIVDGDHRMEPGMPESFNVLIKEIRSLGIDIDLETE.

Belongs to the RNA polymerase beta chain family. The RNAP catalytic core consists of 2 alpha, 1 beta, 1 beta' and 1 omega subunit. When a sigma factor is associated with the core the holoenzyme is formed, which can initiate transcription.

The catalysed reaction is RNA(n) + a ribonucleoside 5'-triphosphate = RNA(n+1) + diphosphate. Its function is as follows. DNA-dependent RNA polymerase catalyzes the transcription of DNA into RNA using the four ribonucleoside triphosphates as substrates. This Pseudomonas syringae pv. tomato (strain ATCC BAA-871 / DC3000) protein is DNA-directed RNA polymerase subunit beta.